Consider the following 2090-residue polypeptide: Nuclear pore complex protein Nup205 (2090 aa).

The protein belongs to the NUP186/NUP192/NUP205 family. Part of the nuclear pore complex (NPC).

It localises to the nucleus. Its subcellular location is the nuclear pore complex. Its function is as follows. Plays a role in the nuclear pore complex (NPC) assembly and maintenance, but with limited role in NPC permeability. Required for specific nuclear import pathways such as Mad import. This chain is Nuclear pore complex protein Nup205, found in Drosophila melanogaster (Fruit fly).